A 543-amino-acid polypeptide reads, in one-letter code: MARYIFITGGVVSSLGKGLASAALGALLQSRGYKVRLRKLDPYLNLDPGTMSPYQHGEVFVTDDGAETDLDLGHYERFTGRPATKADNITTGRIYQDILTKERRGDYLGATIQVIPHVTNAIKEFILDSNDAYDFVLCEIGGTVGDIEGLPFFEAIRQIKNDLPRGEAIYVHLTLLPYIPSAGELKTKPTQHSVKELRSIGIQPDILLCRTDREIPKEERRKLGLFCNVRESAVIEARDVDNIYAVPEAYHAAGLDDEVLAAFGIAPKAEPDMISWNVINERIRNPEGQVTIAIVGKYTGMKDAYKSLSEALSHGGIANKVKVNLDWIESEVFENEDPAPFLEHVNGILVPGGFGQRGAEGKIRAAQFARERNVPYFGICFGMQMAVIEAARNLAGIAAANSTEFGPTKEPLVGLMTEWLRGNEREQRSHAGDLGGTMRLGAYPAMLQRGSRVSEVYGGALEISERHRHRYEVNTAYKDRLEQHGLRFSGLSPDGVLPEIVEYEDHPWFIGVQFHPELKSRPFEPHPLFASFVQAAVVQSRLV.

Residues 1–265 (MARYIFITGG…DDEVLAAFGI (265 aa)) are amidoligase domain. Serine 13 lines the CTP pocket. Serine 13 lines the UTP pocket. 14 to 19 (SLGKGL) serves as a coordination point for ATP. L-glutamine is bound at residue tyrosine 54. Aspartate 71 is an ATP binding site. Positions 71 and 139 each coordinate Mg(2+). CTP-binding positions include 146–148 (DIE), 186–191 (KTKPTQ), and lysine 222. UTP contacts are provided by residues 186–191 (KTKPTQ) and lysine 222. ATP is bound at residue 238 to 240 (RDV). Positions 291 to 542 (TIAIVGKYTG…VQAAVVQSRL (252 aa)) constitute a Glutamine amidotransferase type-1 domain. Glycine 353 contributes to the L-glutamine binding site. Cysteine 380 functions as the Nucleophile; for glutamine hydrolysis in the catalytic mechanism. L-glutamine is bound by residues 381 to 384 (FGMQ), glutamate 404, and arginine 470. Catalysis depends on residues histidine 515 and glutamate 517.

Belongs to the CTP synthase family. Homotetramer.

It catalyses the reaction UTP + L-glutamine + ATP + H2O = CTP + L-glutamate + ADP + phosphate + 2 H(+). The enzyme catalyses L-glutamine + H2O = L-glutamate + NH4(+). It carries out the reaction UTP + NH4(+) + ATP = CTP + ADP + phosphate + 2 H(+). Its pathway is pyrimidine metabolism; CTP biosynthesis via de novo pathway; CTP from UDP: step 2/2. With respect to regulation, allosterically activated by GTP, when glutamine is the substrate; GTP has no effect on the reaction when ammonia is the substrate. The allosteric effector GTP functions by stabilizing the protein conformation that binds the tetrahedral intermediate(s) formed during glutamine hydrolysis. Inhibited by the product CTP, via allosteric rather than competitive inhibition. Catalyzes the ATP-dependent amination of UTP to CTP with either L-glutamine or ammonia as the source of nitrogen. Regulates intracellular CTP levels through interactions with the four ribonucleotide triphosphates. The chain is CTP synthase from Rhodopseudomonas palustris (strain BisB18).